Here is a 1409-residue protein sequence, read N- to C-terminus: DNA-directed RNA polymerase subunit beta' (1409 aa).

4 residues coordinate Zn(2+): Cys70, Cys72, Cys85, and Cys88. Asp460, Asp462, and Asp464 together coordinate Mg(2+). Cys814, Cys888, Cys895, and Cys898 together coordinate Zn(2+).

The protein belongs to the RNA polymerase beta' chain family. As to quaternary structure, the RNAP catalytic core consists of 2 alpha, 1 beta, 1 beta' and 1 omega subunit. When a sigma factor is associated with the core the holoenzyme is formed, which can initiate transcription. Mg(2+) is required as a cofactor. Requires Zn(2+) as cofactor.

The enzyme catalyses RNA(n) + a ribonucleoside 5'-triphosphate = RNA(n+1) + diphosphate. DNA-dependent RNA polymerase catalyzes the transcription of DNA into RNA using the four ribonucleoside triphosphates as substrates. This Shewanella violacea protein is DNA-directed RNA polymerase subunit beta'.